The sequence spans 773 residues: E3 ubiquitin-protein ligase msl-2 (773 aa).

The Zn(2+) site is built by C41, C44, C59, H61, C64, C67, C78, and C84. An RING-type zinc finger spans residues 41 to 85; it reads CVVCCQLLVDPYSPKGKRCQHNVCRLCLRGKKHLFPSCTQCEGCS. Residues 424–468 adopt a coiled-coil conformation; that stretch reads VQTELQDAESLQKDFEDAKAAAEEAKEKEKDLHAISAELQKEDSD. The disordered stretch occupies residues 460 to 525; that stretch reads AELQKEDSDE…EKVKPPKPKC (66 aa). The region spanning 520-571 is the CXC MSL2-type domain; it reads PPKPKCRCGISGSSNTLTTCRNSRCPCYKSYNSCAGCHCVCCKNPHKEDYVE. 9 residues coordinate Zn(2+): C525, C527, C539, C544, C546, C553, C556, C558, and C561. Residues 571 to 773 are C-terminal disordered region (CTD); the sequence is ESDEDDDLED…EEIMSGSDDL (203 aa). Positions 572-581 are enriched in acidic residues; it reads SDEDDDLEDF. Residues 572 to 616 form a disordered region; sequence SDEDDDLEDFEMPKDVPEPMTQSEEPVVAEPRQEENSMAPPDSSA. The clamp-binding domain (CBD) stretch occupies residues 620–685; that stretch reads LVPLNNLQQS…SLPQYAYIMP (66 aa). The segment at 650-708 is pro/Bas region; sequence QGSKPLDPVTVGFTIRVQLQHTDGFGSLPQYAYIMPTIDPPNPPAPSLSPPPPPAPDRE. Positions 687-704 are enriched in pro residues; the sequence is IDPPNPPAPSLSPPPPPA. Residues 687 to 773 are disordered; the sequence is IDPPNPPAPS…EEIMSGSDDL (87 aa). Basic and acidic residues predominate over residues 705 to 714; the sequence is PDREVIEPPA. Positions 715 to 726 are enriched in basic residues; that stretch reads KKFRTSRTRRGR. Positions 742 to 759 are enriched in polar residues; sequence GSRSNSAAGDRSSATDNA.

This sequence belongs to the MSL2 family. Component of the male-specific lethal (MSL) histone acetyltransferase complex, composed of mof, mle, msl-1, msl-2 and msl-3 proteins, as well as roX1 and roX2 non-coding RNAs. When not associated with chromatin, the MSL complex associates with msl-2 mRNAs, possibly to regulate the amount of available MSL complex. Interacts with Clamp; promoting cooperative binding to DNA PionX sites and recruitment of the MSL complex to chromatin. Post-translationally, autoubiquitinated.

It localises to the nucleus. The protein resides in the chromosome. The enzyme catalyses S-ubiquitinyl-[E2 ubiquitin-conjugating enzyme]-L-cysteine + [acceptor protein]-L-lysine = [E2 ubiquitin-conjugating enzyme]-L-cysteine + N(6)-ubiquitinyl-[acceptor protein]-L-lysine.. It functions in the pathway protein modification; protein ubiquitination. In terms of biological role, limiting component of the male-specific lethal (MSL) histone acetyltransferase complex, a multiprotein complex essential for elevating transcription of the single X chromosome in the male (X chromosome dosage compensation). The MSL complex specifically associates with the single X chromosome in males and mediates formation of H4K16ac, promoting a two-fold activation of X chromosome. Msl-2 is only produced in males, constituting the limiting component of the MSL complex. Within the MSL complex, msl-2 mediates the selective binding to the X chromosome and recruitment of the MSL complex via two different mechanisms. Recognizes DNA motifs that are enriched on X chromosome, named PionX sites, which are characterized by sequence features and distinct DNA conformation (base roll). Specific recognition of the X chromosome is also mediated by the formation of a gel-like state: msl-2 undergoes liquid-liquid phase separation upon binding to roX1 and roX2 non-coding RNAs, leading to nucleate the MSL complex on the X chromosome. Msl-2 is also required for translation and/or stability of msl-1 in males. Also acts as an E3 ubiquitin ligase: in complex with msl-1, mediates ubiquitination of histone H2B at 'Lys-34' (H2BK34Ub). Also catalyzes ubiquitination of msl-1, msl-3 and mof components of the MSL complex. The polypeptide is E3 ubiquitin-protein ligase msl-2 (Drosophila melanogaster (Fruit fly)).